The sequence spans 306 residues: UDP-N-acetylenolpyruvoylglucosamine reductase (306 aa).

The FAD-binding PCMH-type domain maps to valine 34–serine 198. The active site involves arginine 177. Serine 227 (proton donor) is an active-site residue. Glutamate 297 is a catalytic residue.

This sequence belongs to the MurB family. FAD is required as a cofactor.

The protein localises to the cytoplasm. The enzyme catalyses UDP-N-acetyl-alpha-D-muramate + NADP(+) = UDP-N-acetyl-3-O-(1-carboxyvinyl)-alpha-D-glucosamine + NADPH + H(+). The protein operates within cell wall biogenesis; peptidoglycan biosynthesis. Functionally, cell wall formation. The sequence is that of UDP-N-acetylenolpyruvoylglucosamine reductase from Clostridium botulinum (strain ATCC 19397 / Type A).